Reading from the N-terminus, the 95-residue chain is Protein RnfH (95 aa).

Belongs to the UPF0125 (RnfH) family.

This Methylococcus capsulatus (strain ATCC 33009 / NCIMB 11132 / Bath) protein is Protein RnfH.